The chain runs to 384 residues: MEEFIVKNGKRLKCGYTTGSCAAAAVKAGAVMLLGRTTIDEVIVNTPKGIRLNLQIGDIYKQKECISCSVKKDAGDDPDVTDGIKIFAKVEKLEKEILIEGGSGIGRVTKSGLQCAVGEAAINPVPRQMIQEVLKEVSETYGYKGGFSVVISAEDGEEIAKKTFNPRLGITGGISILGTSGIVEPMSEKALIETIHREINVKITQNNEYFLVTPGNFGRDFALKRFGLDIDKGVKCSNYIGETIDYAVYNNIKNILLIGHAGKLCKIAGGIMNTHSRTADGRCEIFAAHAALCGASKECINNIMQSMTTDEINVILREEGLEDAVNISILEKIKFHLNYRANYKARIEVVMFTDLNRELQDRVYYHTSGAVDMIKELCKESDKG.

It belongs to the CbiD family.

It carries out the reaction Co-precorrin-5B + S-adenosyl-L-methionine = Co-precorrin-6A + S-adenosyl-L-homocysteine. Its pathway is cofactor biosynthesis; adenosylcobalamin biosynthesis; cob(II)yrinate a,c-diamide from sirohydrochlorin (anaerobic route): step 6/10. Functionally, catalyzes the methylation of C-1 in cobalt-precorrin-5B to form cobalt-precorrin-6A. This chain is Cobalt-precorrin-5B C(1)-methyltransferase, found in Ruminiclostridium cellulolyticum (strain ATCC 35319 / DSM 5812 / JCM 6584 / H10) (Clostridium cellulolyticum).